The following is a 220-amino-acid chain: Small ribosomal subunit protein uS3 (220 aa).

The KH type-2 domain occupies 38-106 (IRKYVKGRLK…RVHININEIK (69 aa)).

This sequence belongs to the universal ribosomal protein uS3 family. As to quaternary structure, part of the 30S ribosomal subunit. Forms a tight complex with proteins S10 and S14.

In terms of biological role, binds the lower part of the 30S subunit head. Binds mRNA in the 70S ribosome, positioning it for translation. In Brevibacillus brevis (strain 47 / JCM 6285 / NBRC 100599), this protein is Small ribosomal subunit protein uS3.